The chain runs to 213 residues: Large ribosomal subunit protein uL3 (213 aa).

It belongs to the universal ribosomal protein uL3 family. Part of the 50S ribosomal subunit. Forms a cluster with proteins L14 and L19.

In terms of biological role, one of the primary rRNA binding proteins, it binds directly near the 3'-end of the 23S rRNA, where it nucleates assembly of the 50S subunit. This chain is Large ribosomal subunit protein uL3, found in Desulforudis audaxviator (strain MP104C).